The sequence spans 23 residues: SELTVEDVEPLNNADKNKVVIXI.

Stimulates synthesis of ecdysteroid in the testes of larvae and pupae. This Lymantria dispar (Gypsy moth) protein is Testis ecdysiotropin peptide B.